A 242-amino-acid polypeptide reads, in one-letter code: Orotidine 5'-phosphate decarboxylase (242 aa).

Substrate is bound by residues aspartate 22, lysine 44, 71–80 (DLKYHDIPNT), threonine 130, arginine 190, glutamine 199, glycine 219, and arginine 220. Catalysis depends on lysine 73, which acts as the Proton donor.

This sequence belongs to the OMP decarboxylase family. Type 1 subfamily. In terms of assembly, homodimer.

It carries out the reaction orotidine 5'-phosphate + H(+) = UMP + CO2. Its pathway is pyrimidine metabolism; UMP biosynthesis via de novo pathway; UMP from orotate: step 2/2. Its function is as follows. Catalyzes the decarboxylation of orotidine 5'-monophosphate (OMP) to uridine 5'-monophosphate (UMP). The chain is Orotidine 5'-phosphate decarboxylase from Laribacter hongkongensis (strain HLHK9).